The sequence spans 354 residues: MKRPLDFLLAICLILLRSSTFADEHTVHWNSTNSMFRNRHPSIEVRLGDVVRFVCPDNEGRKNGEYLTVYEVSEFAMGECALESNSREVIKCGVDTNTEKIIRTHQLPIGESREPPKNVAQFIRSVNPIPNGKEYQPGQTYYYITTSSGKPGGIGQQMYGLCVSKNMRLSMKVLSSQPTPSPSSKPARSRTDARRQEDFITKSSAELMGGQEDEDSENDNAHLLPRDLEIATNPKFRRPSQFDQAAASAGVLDGQFLKVVQMAKEGKTGTFENDREVQKSAEKDAWDPINRHYVADLMNSAYKNANDRVVYQREPDFLIHEEDISTNSLGYSSSSSSSLPTFLIVFLIAVNLLF.

Residues 1–22 (MKRPLDFLLAICLILLRSSTFA) form the signal peptide. The 151-residue stretch at 23-173 (DEHTVHWNST…SKNMRLSMKV (151 aa)) folds into the Ephrin RBD domain. Asn-30 carries an N-linked (GlcNAc...) asparagine glycan. Cystine bridges form between Cys-55/Cys-92 and Cys-80/Cys-162. The tract at residues 173–196 (VLSSQPTPSPSSKPARSRTDARRQ) is disordered. Positions 175-186 (SSQPTPSPSSKP) are enriched in low complexity. Ser-335 carries GPI-anchor amidated serine lipidation. Residues 336-354 (SSSLPTFLIVFLIAVNLLF) constitute a propeptide, removed in mature form.

It belongs to the ephrin family. Post-translationally, may undergo proteolysis by metalloprotease sup-17 to give rise to a soluble form.

It is found in the cell membrane. In terms of biological role, regulates the formation or stabilization of cell-cell contacts at several stages of epithelial morphogenesis. In early embryonic development, involved in ventral closure of the epidermis. During male tail morphogenesis, regulates precursor cell sorting together with mab-20 and allows the formation of distinct sensory rays. Probably acts as a ligand for lad-2 to regulate axon guidance of several neurons including SDQL, SDQR, SMD and PLN neurons during neurogenesis. This is Ephrin-4 (efn-4) from Caenorhabditis briggsae.